Here is a 364-residue protein sequence, read N- to C-terminus: uncharacterized protein (364 aa).

This is an uncharacterized protein from Escherichia coli (strain K12).